The sequence spans 592 residues: Aspartate--tRNA(Asp/Asn) ligase (592 aa).

Position 175 (glutamate 175) interacts with L-aspartate. The tract at residues 199–202 (QLFK) is aspartate. Arginine 221 contacts L-aspartate. Residues 221–223 (RDE) and glutamine 230 each bind ATP. Histidine 450 contributes to the L-aspartate binding site. ATP is bound at residue glutamate 483. Arginine 490 is a binding site for L-aspartate. 535 to 538 (GLDR) provides a ligand contact to ATP.

The protein belongs to the class-II aminoacyl-tRNA synthetase family. Type 1 subfamily. As to quaternary structure, homodimer.

The protein resides in the cytoplasm. It catalyses the reaction tRNA(Asx) + L-aspartate + ATP = L-aspartyl-tRNA(Asx) + AMP + diphosphate. In terms of biological role, aspartyl-tRNA synthetase with relaxed tRNA specificity since it is able to aspartylate not only its cognate tRNA(Asp) but also tRNA(Asn). Reaction proceeds in two steps: L-aspartate is first activated by ATP to form Asp-AMP and then transferred to the acceptor end of tRNA(Asp/Asn). In Acinetobacter baumannii (strain AB307-0294), this protein is Aspartate--tRNA(Asp/Asn) ligase.